We begin with the raw amino-acid sequence, 117 residues long: MTRAKSGKISKNRHKKILKLAKGYRGRANSCFRVAIEKVEKALQYAYRDRRNRKRDFRGLWIQRINAAVREHGFVYSQFIGALKKAEIDIDRKVLAELAVNNSDGFASIVEKTKAHI.

This sequence belongs to the bacterial ribosomal protein bL20 family.

Binds directly to 23S ribosomal RNA and is necessary for the in vitro assembly process of the 50S ribosomal subunit. It is not involved in the protein synthesizing functions of that subunit. The protein is Large ribosomal subunit protein bL20 of Rickettsia akari (strain Hartford).